The chain runs to 83 residues: MSFLSFLLGQKKSSASVAKERLQIILAHERGRGDSPDYLPQLQQELVAVISKYVKIDPEDIKVHLERQDTLEVLEVKIEMPQN.

Belongs to the MinE family.

Prevents the cell division inhibition by proteins MinC and MinD at internal division sites while permitting inhibition at polar sites. This ensures cell division at the proper site by restricting the formation of a division septum at the midpoint of the long axis of the cell. In Bordetella parapertussis (strain 12822 / ATCC BAA-587 / NCTC 13253), this protein is Cell division topological specificity factor.